Reading from the N-terminus, the 126-residue chain is Holo-[acyl-carrier-protein] synthase (126 aa).

The Mg(2+) site is built by D9 and E58.

The protein belongs to the P-Pant transferase superfamily. AcpS family. Mg(2+) is required as a cofactor.

The protein resides in the cytoplasm. It carries out the reaction apo-[ACP] + CoA = holo-[ACP] + adenosine 3',5'-bisphosphate + H(+). In terms of biological role, transfers the 4'-phosphopantetheine moiety from coenzyme A to a Ser of acyl-carrier-protein. The chain is Holo-[acyl-carrier-protein] synthase from Escherichia coli O139:H28 (strain E24377A / ETEC).